Consider the following 492-residue polypeptide: Protein adenylyltransferase Fic (492 aa).

The segment covering 1–18 has biased composition (low complexity); sequence MGTEAEQPSPPAQQQDQE. Positions 1 to 26 are disordered; sequence MGTEAEQPSPPAQQQDQENPPLCKAQ. The chain crosses the membrane as a helical span at residues 33 to 55; sequence LYRFVLIFVAGSLAAWTFHALSS. TPR repeat units lie at residues 118–151 and 152–186; these read ALGA…APRH and PEVL…SPSN. An Inhibitory (S/T)XXXE(G/N) motif motif is present at residues 243 to 248; it reads SVGIEG. Residues Glu-247 and 328-331 each bind ATP; that span reads VGGH. The Fido domain occupies 297–432; the sequence is ITIKDILELH…IRPFVRFIAD (136 aa). His-375 is a catalytic residue. Residues 379 to 386, 411 to 412, and Asn-419 contribute to the ATP site; these read DGNGRTSR and YY.

This sequence belongs to the fic family. As to quaternary structure, homodimer; homodimerization may regulate adenylyltransferase and phosphodiesterase activities.

Its subcellular location is the membrane. The enzyme catalyses L-tyrosyl-[protein] + ATP = O-(5'-adenylyl)-L-tyrosyl-[protein] + diphosphate. The catalysed reaction is L-threonyl-[protein] + ATP = 3-O-(5'-adenylyl)-L-threonyl-[protein] + diphosphate. It carries out the reaction 3-O-(5'-adenylyl)-L-threonyl-[protein] + H2O = L-threonyl-[protein] + AMP + H(+). With respect to regulation, the side chain of Glu-247 determines which of the two opposing activities (AMPylase or de-AMPylase) will take place. In response to endoplasmic reticulum stress, mediates de-AMPylase activity. Adenylyltransferase activity is inhibited by the inhibitory helix present at the N-terminus: Glu-247 binds ATP and competes with ATP-binding at Arg-386, thereby preventing adenylyltransferase activity. In unstressed cells, disengagement of Glu-247 promotes adenylyltransferase activity. Activation dissociates ATP-binding from Glu-247, allowing ordered binding of the entire ATP moiety with the alpha-phosphate in an orientation that is productive for accepting an incoming target hydroxyl side chain. Functionally, protein that can both mediate the addition of adenosine 5'-monophosphate (AMP) to specific residues of target proteins (AMPylation), and the removal of the same modification from target proteins (de-AMPylation), depending on the context. The side chain of Glu-247 determines which of the two opposing activities (AMPylase or de-AMPylase) will take place. Acts as a key regulator of the unfolded protein response (UPR) by mediating AMPylation or de-AMPylation of Hsc70-3/BiP. In unstressed cells, acts as an adenylyltransferase by mediating AMPylation of Hsc70-3/BiP at 'Thr-518', thereby inactivating it. In response to endoplasmic reticulum stress, acts as a phosphodiesterase by mediating removal of ATP (de-AMPylation) from Hsc70-3/BiP at 'Thr-518', leading to restore HSPA5/BiP activity. This is Protein adenylyltransferase Fic from Drosophila melanogaster (Fruit fly).